Here is an 828-residue protein sequence, read N- to C-terminus: Periplasmic nitrate reductase (828 aa).

Residues 1–31 constitute a signal peptide (tat-type signal); sequence MKLSRRSFMKANAVAAAAAAAGLSVPGVARA. Residues 39–95 enclose the 4Fe-4S Mo/W bis-MGD-type domain; that stretch reads IKWDKAPCRFCGTGCGVLVGTQQGRIVACQGDPDAPVNRGLNCIKGYFLPKIMYGKD. Positions 46, 49, 53, and 81 each coordinate [4Fe-4S] cluster. Mo-bis(molybdopterin guanine dinucleotide) contacts are provided by residues lysine 83, glutamine 150, asparagine 175, cysteine 179, 212-219, 243-247, 262-264, methionine 372, glutamine 376, asparagine 482, 508-509, lysine 531, aspartate 558, and 718-727; these read WGSNMAEM, STFQH, QSD, SD, and TGRVLEHWHT. Phenylalanine 794 contacts substrate. 2 residues coordinate Mo-bis(molybdopterin guanine dinucleotide): asparagine 802 and lysine 819.

The protein belongs to the prokaryotic molybdopterin-containing oxidoreductase family. NasA/NapA/NarB subfamily. In terms of assembly, component of the periplasmic nitrate reductase NapAB complex composed of NapA and NapB. It depends on [4Fe-4S] cluster as a cofactor. Requires Mo-bis(molybdopterin guanine dinucleotide) as cofactor. Post-translationally, predicted to be exported by the Tat system. The position of the signal peptide cleavage has not been experimentally proven.

Its subcellular location is the periplasm. The catalysed reaction is 2 Fe(II)-[cytochrome] + nitrate + 2 H(+) = 2 Fe(III)-[cytochrome] + nitrite + H2O. Its function is as follows. Catalytic subunit of the periplasmic nitrate reductase complex NapAB. Receives electrons from NapB and catalyzes the reduction of nitrate to nitrite. This is Periplasmic nitrate reductase from Citrobacter koseri (strain ATCC BAA-895 / CDC 4225-83 / SGSC4696).